The chain runs to 207 residues: Small ribosomal subunit protein uS3c (207 aa).

The KH type-2 domain occupies 39–109; it reads IRDYIFTNLL…QLKINIIDVT (71 aa).

It belongs to the universal ribosomal protein uS3 family. In terms of assembly, part of the 30S ribosomal subunit.

The protein localises to the plastid. It localises to the chloroplast. The chain is Small ribosomal subunit protein uS3c (rps3) from Cyanidium caldarium (Red alga).